A 266-amino-acid chain; its full sequence is Zinc transport system ATP-binding protein TroB (266 aa).

Residues 11–243 form the ABC transporter domain; it reads VQVDDLTLAY…YVQRAYGGRI (233 aa). An ATP-binding site is contributed by 43 to 50; it reads GPNGAGKS.

Belongs to the ABC transporter superfamily.

Its function is as follows. Part of an ATP-driven transport system TroABCD for zinc. This chain is Zinc transport system ATP-binding protein TroB (troB), found in Treponema pallidum (strain Nichols).